The primary structure comprises 386 residues: MNIHEYQGKAVLRSYGVSVPNGKVAFTVEEAVEAAKELGTDVCVEKAQIHAGGRGKAGGVKVAKNLDEVRTYAESILGTTLVTHQTGPEGKEVKRLLIEEGCDIKKEYYVGLVLDRATSQVVLMASEEGGTEIEEVAEKTPEKIFKEYIDPAVGLQGFQARRIAFNINIPKELVGQAVKFMMGLYRAFIEKDCSIAEINPLVTTGEGKVMALDAKLNFDSNALYRHKDILELRDLDEEDSKEIEASKYDLNYIPLDGNIGCMVNGAGLAMATMDIIKHYHGDPANFLDVGGGATAEKVTEAFKIILSDKNVKGIFVNIFGGIMKCDVIAEGVIEATKQVGLELPLVVRLEGTNVELGKKILNESGLNIVAAESMADGAQKIVSLVG.

The ATP-grasp domain occupies 9-244; that stretch reads KAVLRSYGVS…LDEEDSKEIE (236 aa). ATP contacts are provided by residues K46, 53 to 55, E99, C102, and E107; that span reads GRG. Mg(2+)-binding residues include N199 and D213. Residues N264 and 321–323 contribute to the substrate site; that span reads GIM.

This sequence belongs to the succinate/malate CoA ligase beta subunit family. Heterotetramer of two alpha and two beta subunits. The cofactor is Mg(2+).

The catalysed reaction is succinate + ATP + CoA = succinyl-CoA + ADP + phosphate. It carries out the reaction GTP + succinate + CoA = succinyl-CoA + GDP + phosphate. Its pathway is carbohydrate metabolism; tricarboxylic acid cycle; succinate from succinyl-CoA (ligase route): step 1/1. In terms of biological role, succinyl-CoA synthetase functions in the citric acid cycle (TCA), coupling the hydrolysis of succinyl-CoA to the synthesis of either ATP or GTP and thus represents the only step of substrate-level phosphorylation in the TCA. The beta subunit provides nucleotide specificity of the enzyme and binds the substrate succinate, while the binding sites for coenzyme A and phosphate are found in the alpha subunit. The polypeptide is Succinate--CoA ligase [ADP-forming] subunit beta (Bacillus cereus (strain ATCC 14579 / DSM 31 / CCUG 7414 / JCM 2152 / NBRC 15305 / NCIMB 9373 / NCTC 2599 / NRRL B-3711)).